The following is a 364-amino-acid chain: Cyclin-D3-2 (364 aa).

The segment at 331–364 (PPGRPIKRGAAAATTADPLPADEESRDAWPPYAA) is disordered. Positions 340-349 (AAAATTADPL) are enriched in low complexity.

It belongs to the cyclin family. Cyclin D subfamily.

This is Cyclin-D3-2 (CYCD3-2) from Oryza sativa subsp. japonica (Rice).